The chain runs to 300 residues: Cation-efflux pump FieF (300 aa).

Transmembrane regions (helical) follow at residues 11 to 31 (LAAV…VFAW), 40 to 60 (LASL…LLVV), 81 to 101 (LAAL…ILTG), and 114 to 134 (PEVG…LVSF). Zn(2+)-binding residues include Asp45 and Asp49. Zn(2+) contacts are provided by His153 and Asp157. The next 2 membrane-spanning stretches (helical) occupy residues 156–176 (SDLL…KGIT) and 182–202 (FALG…YDAV).

This sequence belongs to the cation diffusion facilitator (CDF) transporter (TC 2.A.4) family. FieF subfamily. Homodimer.

It localises to the cell inner membrane. It carries out the reaction Zn(2+)(in) + H(+)(out) = Zn(2+)(out) + H(+)(in). The enzyme catalyses Cd(2+)(in) + H(+)(out) = Cd(2+)(out) + H(+)(in). The catalysed reaction is Fe(2+)(in) + H(+)(out) = Fe(2+)(out) + H(+)(in). Its function is as follows. Divalent metal cation transporter which exports Zn(2+), Cd(2+) and possibly Fe(2+). May be involved in zinc and iron detoxification by efflux. The sequence is that of Cation-efflux pump FieF from Pectobacterium atrosepticum (strain SCRI 1043 / ATCC BAA-672) (Erwinia carotovora subsp. atroseptica).